The following is a 422-amino-acid chain: p-hydroxyphenylacetate 3-hydroxylase, oxygenase component (422 aa).

Trp-112 contributes to the FMN binding site. Substrate is bound by residues His-120 and Ser-146. Residues 146-148 (SSI) and 169-171 (WSS) each bind FMN. 263 to 266 (RPYF) lines the substrate pocket. Residues Arg-292, Tyr-296, 374-375 (AT), and 396-397 (HA) contribute to the FMN site. Substrate is bound at residue Tyr-296.

The protein belongs to the HpaH/HsaA monooxygenase family. Homotetramer. The p-hydroxyphenylacetate 3-hydroxylase (HpaH) is composed of an oxygenase component C2 and a reductase component C1.

It carries out the reaction 4-hydroxyphenylacetate + FMNH2 + O2 = 3,4-dihydroxyphenylacetate + FMN + H2O + H(+). The catalysed reaction is 4-hydroxyphenylacetate + FADH2 + O2 = 3,4-dihydroxyphenylacetate + FAD + H2O + H(+). The protein operates within aromatic compound metabolism; 4-hydroxyphenylacetate degradation; pyruvate and succinate semialdehyde from 4-hydroxyphenylacetate: step 1/7. Its activity is regulated as follows. Inhibited by flavin concentrations greater than 15 uM. Also inhibited by excess p-hydroxyphenylacetate (HPA). Its function is as follows. Oxygenase component of a two-component system that utilizes reduced FMN (FMNH2) supplied by the reductase component to catalyze the hydroxylation of 4-hydroxyphenylacetic acid, leading to the production of 3,4-dihydroxyphenylacetate (3,4-DHPA). Also utilizes other reduced flavins such as FADH2 and reduced riboflavin to a lesser extent. Only the compounds with a hydroxyl group in the para (p-) position can be hydroxylated. May also oxidize phenol to catechol, and hydroxylate other phenol derivatives. The chain is p-hydroxyphenylacetate 3-hydroxylase, oxygenase component from Acinetobacter baumannii.